The sequence spans 237 residues: tRNA (guanine-N(1)-)-methyltransferase (237 aa).

S-adenosyl-L-methionine-binding positions include G115 and 134–139; that span reads LGDFVL.

Belongs to the RNA methyltransferase TrmD family. In terms of assembly, homodimer.

It is found in the cytoplasm. It carries out the reaction guanosine(37) in tRNA + S-adenosyl-L-methionine = N(1)-methylguanosine(37) in tRNA + S-adenosyl-L-homocysteine + H(+). In terms of biological role, specifically methylates guanosine-37 in various tRNAs. The chain is tRNA (guanine-N(1)-)-methyltransferase from Synechococcus sp. (strain RCC307).